The following is a 245-amino-acid chain: 2,3-bisphosphoglycerate-dependent phosphoglycerate mutase (245 aa).

Substrate-binding positions include 8-15 (RHGQSLWN), 21-22 (TG), arginine 60, 87-90 (ERHY), lysine 98, 114-115 (RR), and 183-184 (GN). The active-site Tele-phosphohistidine intermediate is histidine 9. The active-site Proton donor/acceptor is glutamate 87.

It belongs to the phosphoglycerate mutase family. BPG-dependent PGAM subfamily.

It carries out the reaction (2R)-2-phosphoglycerate = (2R)-3-phosphoglycerate. Its pathway is carbohydrate degradation; glycolysis; pyruvate from D-glyceraldehyde 3-phosphate: step 3/5. In terms of biological role, catalyzes the interconversion of 2-phosphoglycerate and 3-phosphoglycerate. This chain is 2,3-bisphosphoglycerate-dependent phosphoglycerate mutase, found in Bacillus cereus (strain G9842).